A 438-amino-acid polypeptide reads, in one-letter code: Enolase (438 aa).

Residues His159 and Glu168 each coordinate substrate. Glu211 (proton donor) is an active-site residue. The Mg(2+) site is built by Asp246, Glu297, and Asp322. Substrate contacts are provided by Glu297 and Asp322. Lys347 acts as the Proton acceptor in catalysis. Residues 374–377 (SHRS) and Lys398 each bind substrate.

Belongs to the enolase family. As to quaternary structure, homodimer. Requires Mg(2+) as cofactor.

The protein localises to the cytoplasm. It catalyses the reaction (2R)-2-phosphoglycerate = phosphoenolpyruvate + H2O. Its pathway is carbohydrate degradation; glycolysis; pyruvate from D-glyceraldehyde 3-phosphate: step 4/5. The sequence is that of Enolase (enoA) from Penicillium citrinum.